Reading from the N-terminus, the 76-residue chain is MKLLLLLLTVTLLLAQVTPVMKCWGKSGRCRTTCKESEVYYILCKTEAKCCVDPKYVPVKPKLTDRNTSLESTSAV.

Residues 1 to 15 form the signal peptide; that stretch reads MKLLLLLLTVTLLLA. 3 cysteine pairs are disulfide-bonded: C23/C50, C30/C44, and C34/C51.

It belongs to the beta-defensin family.

The protein resides in the secreted. In terms of biological role, has antibacterial activity. The chain is Beta-defensin 121 (DEFB121) from Pan troglodytes (Chimpanzee).